The sequence spans 513 residues: Ferulic acid decarboxylase 1 (513 aa).

Mn(2+) is bound by residues asparagine 174, histidine 197, and glutamate 240. Residues 174–179 (NWSIAR), 196–197 (QH), and glutamate 240 contribute to the prenylated FMN site. The active-site Proton donor is the glutamate 289. Residue lysine 405 participates in prenylated FMN binding.

It belongs to the UbiD family. UbiD-like/FDC subfamily. In terms of assembly, homodimer. May form higher order oligomers. It depends on Mn(2+) as a cofactor. Prenylated FMN is required as a cofactor.

The protein resides in the cytoplasm. It catalyses the reaction (E)-4-coumarate + H(+) = 4-vinylphenol + CO2. The enzyme catalyses (E)-cinnamate + H(+) = styrene + CO2. The catalysed reaction is (E)-ferulate + H(+) = 2-methoxy-4-vinylphenol + CO2. In terms of biological role, catalyzes the reversible decarboxylation of aromatic carboxylic acids like ferulic acid, p-coumaric acid or cinnamic acid, producing the corresponding vinyl derivatives 4-vinylphenol, 4-vinylguaiacol, and styrene, respectively, which play the role of aroma metabolites. This Candida dubliniensis (strain CD36 / ATCC MYA-646 / CBS 7987 / NCPF 3949 / NRRL Y-17841) (Yeast) protein is Ferulic acid decarboxylase 1.